The sequence spans 152 residues: SsrA-binding protein (152 aa).

Over residues K129–R140 the composition is skewed to basic and acidic residues. The tract at residues K129–E152 is disordered. Residues E141–E152 show a composition bias toward polar residues.

Belongs to the SmpB family.

The protein resides in the cytoplasm. Functionally, required for rescue of stalled ribosomes mediated by trans-translation. Binds to transfer-messenger RNA (tmRNA), required for stable association of tmRNA with ribosomes. tmRNA and SmpB together mimic tRNA shape, replacing the anticodon stem-loop with SmpB. tmRNA is encoded by the ssrA gene; the 2 termini fold to resemble tRNA(Ala) and it encodes a 'tag peptide', a short internal open reading frame. During trans-translation Ala-aminoacylated tmRNA acts like a tRNA, entering the A-site of stalled ribosomes, displacing the stalled mRNA. The ribosome then switches to translate the ORF on the tmRNA; the nascent peptide is terminated with the 'tag peptide' encoded by the tmRNA and targeted for degradation. The ribosome is freed to recommence translation, which seems to be the essential function of trans-translation. In Pelobacter propionicus (strain DSM 2379 / NBRC 103807 / OttBd1), this protein is SsrA-binding protein.